The primary structure comprises 352 residues: uncharacterized protein (352 aa).

This sequence to M.pneumoniae MPN_633 (in the N-terminal section), and M.pneumoniae MPN_634 (in the C-terminal section).

This is an uncharacterized protein from Mycoplasma pneumoniae (strain ATCC 29342 / M129 / Subtype 1) (Mycoplasmoides pneumoniae).